Reading from the N-terminus, the 310-residue chain is Bifunctional protein FolD 3, chloroplastic (310 aa).

Residues 1 to 48 constitute a chloroplast transit peptide; the sequence is MFTDCSSSTTSRLIHLYNRNGVFLPRPSVSQFSLRTTASTWRCTLSIR.

It belongs to the tetrahydrofolate dehydrogenase/cyclohydrolase family. In terms of assembly, homodimer.

The protein localises to the plastid. Its subcellular location is the chloroplast. It catalyses the reaction (6R)-5,10-methylene-5,6,7,8-tetrahydrofolate + NADP(+) = (6R)-5,10-methenyltetrahydrofolate + NADPH. The enzyme catalyses (6R)-5,10-methenyltetrahydrofolate + H2O = (6R)-10-formyltetrahydrofolate + H(+). It participates in one-carbon metabolism; tetrahydrofolate interconversion. Functionally, catalyzes the oxidation of 5,10-methylenetetrahydrofolate to 5,10-methenyltetrahydrofolate and then the hydrolysis of 5,10-methenyltetrahydrofolate to 10-formyltetrahydrofolate. This is Bifunctional protein FolD 3, chloroplastic (FOLD3) from Arabidopsis thaliana (Mouse-ear cress).